Consider the following 56-residue polypeptide: UPF0434 protein CbuK_1382 (56 aa).

This sequence belongs to the UPF0434 family.

This chain is UPF0434 protein CbuK_1382, found in Coxiella burnetii (strain CbuK_Q154) (Coxiella burnetii (strain Q154)).